The sequence spans 562 residues: NAD-dependent malic enzyme (562 aa).

Catalysis depends on Tyr-101, which acts as the Proton donor. Arg-154 is a binding site for NAD(+). Lys-172 serves as the catalytic Proton acceptor. 3 residues coordinate a divalent metal cation: Glu-243, Asp-244, and Asp-267. 2 residues coordinate NAD(+): Asp-267 and Asn-415.

The protein belongs to the malic enzymes family. Homotetramer. Mg(2+) is required as a cofactor. The cofactor is Mn(2+).

The enzyme catalyses (S)-malate + NAD(+) = pyruvate + CO2 + NADH. It carries out the reaction oxaloacetate + H(+) = pyruvate + CO2. The chain is NAD-dependent malic enzyme from Vibrio campbellii (strain ATCC BAA-1116).